We begin with the raw amino-acid sequence, 325 residues long: DNA-directed RNA polymerase subunit alpha (325 aa).

Residues 1–231 form an alpha N-terminal domain (alpha-NTD) region; that stretch reads MQTSLLKPKI…DQLSVFAALE (231 aa). An alpha C-terminal domain (alpha-CTD) region spans residues 246-325; it reads IDPILLRPVD…ENWPPAGLDK (80 aa).

The protein belongs to the RNA polymerase alpha chain family. In terms of assembly, homodimer. The RNAP catalytic core consists of 2 alpha, 1 beta, 1 beta' and 1 omega subunit. When a sigma factor is associated with the core the holoenzyme is formed, which can initiate transcription.

It carries out the reaction RNA(n) + a ribonucleoside 5'-triphosphate = RNA(n+1) + diphosphate. DNA-dependent RNA polymerase catalyzes the transcription of DNA into RNA using the four ribonucleoside triphosphates as substrates. The chain is DNA-directed RNA polymerase subunit alpha from Burkholderia mallei (strain NCTC 10247).